The sequence spans 215 residues: Pyrrolidone-carboxylate peptidase (215 aa).

Catalysis depends on residues glutamate 80, cysteine 143, and histidine 167.

Belongs to the peptidase C15 family. Homotetramer.

Its subcellular location is the cytoplasm. It catalyses the reaction Release of an N-terminal pyroglutamyl group from a polypeptide, the second amino acid generally not being Pro.. Its function is as follows. Removes 5-oxoproline from various penultimate amino acid residues except L-proline. The protein is Pyrrolidone-carboxylate peptidase of Bacillus thuringiensis subsp. konkukian (strain 97-27).